The sequence spans 610 residues: Zinc metalloproteinase-disintegrin-like acurhagin (610 aa).

Residues Met-1–Ser-20 form the signal peptide. Residues Ile-21–Gln-191 constitute a propeptide that is removed on maturation. Gln-192 is modified (pyrrolidone carboxylic acid). Residues Lys-198–Pro-394 enclose the Peptidase M12B domain. Positions 201 and 285 each coordinate Ca(2+). Disulfide bonds link Cys-309–Cys-389, Cys-349–Cys-373, and Cys-351–Cys-356. His-334 serves as a coordination point for Zn(2+). The active site involves Glu-335. Residues His-338 and His-344 each coordinate Zn(2+). Residue Asn-372 is glycosylated (N-linked (GlcNAc...) asparagine). Cys-389, Asn-392, Asn-407, Leu-409, Glu-411, Glu-414, and Asp-417 together coordinate Ca(2+). The 87-residue stretch at Pro-402–Asn-488 folds into the Disintegrin domain. 14 cysteine pairs are disulfide-bonded: Cys-405–Cys-434, Cys-416–Cys-429, Cys-418–Cys-424, Cys-428–Cys-451, Cys-442–Cys-448, Cys-447–Cys-473, Cys-460–Cys-480, Cys-467–Cys-499, Cys-492–Cys-504, Cys-511–Cys-561, Cys-526–Cys-572, Cys-539–Cys-549, Cys-556–Cys-598, and Cys-592–Cys-603. Positions Glu-466 to Asp-468 match the D/ECD-tripeptide motif. Ca(2+) contacts are provided by Asp-468, Pro-469, Glu-471, Asp-483, and Val-484.

This sequence belongs to the venom metalloproteinase (M12B) family. P-III subfamily. P-IIIa sub-subfamily. In terms of assembly, monomer. It depends on Zn(2+) as a cofactor. N-glycosylated. Expressed by the venom gland.

It is found in the secreted. With respect to regulation, the proteinase activity is slightly enhanced by Ca(2+) and Mg(2+), but is completely inhibited by Zn(2+). Is completely inhibited by phenanthroline and EDTA. Not inhibited by PMSF. Snake venom zinc metalloprotease that causes hemorrhage and dose-dependently inhibits platelet aggregation triggered by collagen. This inhibition is due to its binding to glycoprotein VI (GP6) and collagen. The binding to GP6 results in inhibition of the signaling pathway (decrease of tyrosine phosphorylation of signaling proteins such as Syk, LAT, PI3-K and PLCgamma2). Preferentially cleaves alpha chain (FGA) of fibrinogen, followed by beta chain (FGB). Also degrades the extracellular matrix protein fibronectin (FN1), and cleaves collagen and von Willebrand factor (VWF). The chain is Zinc metalloproteinase-disintegrin-like acurhagin from Deinagkistrodon acutus (Hundred-pace snake).